Here is a 528-residue protein sequence, read N- to C-terminus: ATP synthase subunit beta 2 (528 aa).

Polar residues predominate over residues 1–10 (MADPQATNGT). Residues 1 to 27 (MADPQATNGTGAACAERDASDVGDARD) are disordered. The span at 15 to 27 (AERDASDVGDARD) shows a compositional bias: basic and acidic residues. 179 to 186 (GGAGVGKT) lines the ATP pocket. Residues 488–499 (AAAREADARREA) are compositionally biased toward basic and acidic residues. The segment at 488 to 528 (AAAREADARREAAAAASGAGPGTTSDPASGSAEPQGARHGR) is disordered.

This sequence belongs to the ATPase alpha/beta chains family. F-type ATPases have 2 components, CF(1) - the catalytic core - and CF(0) - the membrane proton channel. CF(1) has five subunits: alpha(3), beta(3), gamma(1), delta(1), epsilon(1). CF(0) has three main subunits: a(1), b(2) and c(9-12). The alpha and beta chains form an alternating ring which encloses part of the gamma chain. CF(1) is attached to CF(0) by a central stalk formed by the gamma and epsilon chains, while a peripheral stalk is formed by the delta and b chains.

It localises to the cell inner membrane. It carries out the reaction ATP + H2O + 4 H(+)(in) = ADP + phosphate + 5 H(+)(out). Functionally, produces ATP from ADP in the presence of a proton gradient across the membrane. The catalytic sites are hosted primarily by the beta subunits. The sequence is that of ATP synthase subunit beta 2 from Burkholderia pseudomallei (strain 1106a).